Consider the following 732-residue polypeptide: Iron-sulfur clusters transporter ATM1, mitochondrial (732 aa).

The transit peptide at 1–55 (MGFGSCSRHALFTPAAFSGSFTTMTTSCFKRVYTAQIHGGDALGKRLPSVSSFSG) directs the protein to the mitochondrion. At 56-143 (QLPRHGLHRQ…KNNPNVKFRV (88 aa)) the chain is on the mitochondrial matrix side. The tract at residues 71–114 (STSHRRQTSPPPSPRTTSQSPTVPSKASTTPPTSLNTSKPIATE) is disordered. Residues 85–95 (RTTSQSPTVPS) show a composition bias toward low complexity. The segment covering 96–114 (KASTTPPTSLNTSKPIATE) has biased composition (polar residues). The chain crosses the membrane as a helical span at residues 144–164 (IGALTLLVAGKVLNVQVPFFF). The 289-residue stretch at 144–432 (IGALTLLVAG…LGTVYRELRQ (289 aa)) folds into the ABC transmembrane type-1 domain. The Mitochondrial intermembrane portion of the chain corresponds to 165–181 (KTIVDSLNVPITESTTV). The helical transmembrane segment at 182-202 (WVLAGASIAGYGAARILTTLF) threads the bilayer. Residues 203-262 (GELRNAVFASVAQNAIRKVARETFEHLLNMDMKFHLERQTGGLTRAIDRGTKGISFILSS) lie on the Mitochondrial matrix side of the membrane. Residues 263 to 283 (IVFHVIPTALEISMVCGILSW) form a helical membrane-spanning segment. A topological domain (mitochondrial intermembrane) is located at residue Lys284. Residues 285-305 (FGWDFAAVTAITMLLYTWFTI) traverse the membrane as a helical segment. Over 306 to 378 (KTTAWRTTFR…SLAALNSGQN (73 aa)) the chain is Mitochondrial matrix. Glutathione contacts are provided by residues 311 to 315 (RTTFR) and 374 to 377 (NSGQ). The helical transmembrane segment at 379-399 (FIFSSALTMMMLLGAQGIVKG) threads the bilayer. Residues 400 to 405 (TMTVGD) lie on the Mitochondrial intermembrane side of the membrane. The helical transmembrane segment at 406 to 426 (LVLVNQLVFQLSLPLNFLGTV) threads the bilayer. Gly424 lines the glutathione pocket. The Mitochondrial matrix segment spans residues 427 to 732 (YRELRQSLID…LEVVDEKKKQ (306 aa)). The region spanning 466–702 (IEFRNVAFAY…PGGVYHRLWQ (237 aa)) is the ABC transporter domain. Residues Tyr475 and 499 to 506 (GPSGCGKS) contribute to the ATP site. The segment at 708 to 732 (STQPTDEEIERQREELEVVDEKKKQ) is disordered. Positions 717–732 (ERQREELEVVDEKKKQ) are enriched in basic and acidic residues.

The protein belongs to the ABC transporter superfamily. ABCB family. Heavy Metal importer (TC 3.A.1.210) subfamily. Homodimer.

The protein localises to the mitochondrion inner membrane. Its function is as follows. Performs an essential function in the generation of cytoplasmic iron-sulfur proteins by mediating the ATP-dependent export of mitochondrial Fe/S cluster precursors synthesized by NFS1 and other mitochondrial proteins. Hydrolyzes ATP. Binds glutathione and may function by transporting a glutathione-conjugated iron-sulfur compound. Plays a role during copper stress, in a manner dependent on the copper metalloregulatory transcription factor CUF1. This chain is Iron-sulfur clusters transporter ATM1, mitochondrial, found in Cryptococcus neoformans var. grubii serotype A (strain H99 / ATCC 208821 / CBS 10515 / FGSC 9487) (Filobasidiella neoformans var. grubii).